The primary structure comprises 488 residues: Ribulose bisphosphate carboxylase large chain (488 aa).

Substrate-binding residues include asparagine 128 and threonine 178. Residue lysine 180 is the Proton acceptor of the active site. Lysine 182 contacts substrate. Lysine 206, aspartate 208, and glutamate 209 together coordinate Mg(2+). At lysine 206 the chain carries N6-carboxylysine. Histidine 298 serves as the catalytic Proton acceptor. Positions 299, 331, and 383 each coordinate substrate.

This sequence belongs to the RuBisCO large chain family. Type I subfamily. As to quaternary structure, heterohexadecamer of 8 large chains and 8 small chains. Mg(2+) is required as a cofactor.

The catalysed reaction is 2 (2R)-3-phosphoglycerate + 2 H(+) = D-ribulose 1,5-bisphosphate + CO2 + H2O. The enzyme catalyses D-ribulose 1,5-bisphosphate + O2 = 2-phosphoglycolate + (2R)-3-phosphoglycerate + 2 H(+). Its function is as follows. RuBisCO catalyzes two reactions: the carboxylation of D-ribulose 1,5-bisphosphate, the primary event in carbon dioxide fixation, as well as the oxidative fragmentation of the pentose substrate. Both reactions occur simultaneously and in competition at the same active site. This is Ribulose bisphosphate carboxylase large chain from Xanthobacter autotrophicus (strain ATCC BAA-1158 / Py2).